The following is a 273-amino-acid chain: Undecaprenyl-diphosphatase (273 aa).

7 consecutive transmembrane segments (helical) span residues 13-35 (GLVE…VFGN), 45-62 (VFEI…VFEY), 82-102 (FVLN…LFDK), 108-128 (LFNP…ILWV), 186-206 (TEFS…YDVL), 219-239 (LILI…KALL), and 250-270 (FAYY…SGWI).

Belongs to the UppP family.

It is found in the cell inner membrane. The enzyme catalyses di-trans,octa-cis-undecaprenyl diphosphate + H2O = di-trans,octa-cis-undecaprenyl phosphate + phosphate + H(+). In terms of biological role, catalyzes the dephosphorylation of undecaprenyl diphosphate (UPP). Confers resistance to bacitracin. In Neisseria gonorrhoeae (strain ATCC 700825 / FA 1090), this protein is Undecaprenyl-diphosphatase.